The primary structure comprises 145 residues: Basic phospholipase A2 cPt09 (145 aa).

The signal sequence occupies residues 1–21 (MYPAHLLVLLAVCVSLLGAST). A propeptide spanning residues 22 to 27 (IPPLPL) is cleaved from the precursor. 7 disulfides stabilise this stretch: Cys-38–Cys-98, Cys-54–Cys-144, Cys-56–Cys-72, Cys-71–Cys-125, Cys-78–Cys-118, Cys-87–Cys-111, and Cys-105–Cys-116. Ca(2+)-binding residues include Tyr-55, Gly-57, and Gly-59. Residue His-75 is part of the active site. Residue Asp-76 coordinates Ca(2+). Asp-119 is a catalytic residue.

Belongs to the phospholipase A2 family. Group I subfamily. D49 sub-subfamily. Requires Ca(2+) as cofactor. Expressed by the venom gland.

It localises to the secreted. It carries out the reaction a 1,2-diacyl-sn-glycero-3-phosphocholine + H2O = a 1-acyl-sn-glycero-3-phosphocholine + a fatty acid + H(+). In terms of biological role, PLA2 catalyzes the calcium-dependent hydrolysis of the 2-acyl groups in 3-sn-phosphoglycerides. The protein is Basic phospholipase A2 cPt09 of Laticauda semifasciata (Black-banded sea krait).